The sequence spans 343 residues: MKHSIDSLQKEIESFAITSNETLEEFKLTYLVRKGSIANLFKQLKDVSPDERRAVGQLLNTLKTTAEKKYEDAKDTLASSAASEKNNIIDLTLPGRTHFLGSEHPVQKVLGDMKQIFTAMGFAIETGPELECGVYNFDKLNFPPDHPARDMQDTFFIKLDEKDGNDVLLRTHTSPVQIRVMLDQRPPIRVICPGKVYRNEAISSRSYCVFHQLEGLYIDKNVSFADLKATIYSFAKQMFGQDVQLRFRPSFFPFTEPSAEVDVTCYLCNGKGCKVCKQSGWLEILGCGMVHPNVLCQCGIDPEEYSGYAFGMGVDRTALLRYKIDDIRLLFENDIRMLDQFMQ.

Residue E256 participates in Mg(2+) binding.

Belongs to the class-II aminoacyl-tRNA synthetase family. Phe-tRNA synthetase alpha subunit type 1 subfamily. Tetramer of two alpha and two beta subunits. Mg(2+) serves as cofactor.

It localises to the cytoplasm. The catalysed reaction is tRNA(Phe) + L-phenylalanine + ATP = L-phenylalanyl-tRNA(Phe) + AMP + diphosphate + H(+). The polypeptide is Phenylalanine--tRNA ligase alpha subunit (Prosthecochloris aestuarii (strain DSM 271 / SK 413)).